Reading from the N-terminus, the 393-residue chain is Biotin synthase, mitochondrial (393 aa).

A mitochondrion-targeting transit peptide spans 1 to 20 (MSVSFTRSFPRAFIRSYGTV). In terms of domain architecture, Radical SAM core spans 81–310 (SAIQMCTLMN…ATIVRLAAGR (230 aa)). [4Fe-4S] cluster contacts are provided by Cys96, Cys100, and Cys103. Cys140, Cys173, Cys233, and Arg305 together coordinate [2Fe-2S] cluster. Positions 366–393 (NAATPQQHVDSVAHESEKNPAAPAAEAL) are disordered.

It belongs to the radical SAM superfamily. Biotin synthase family. The cofactor is [4Fe-4S] cluster. [2Fe-2S] cluster serves as cofactor.

The protein localises to the mitochondrion. The catalysed reaction is (4R,5S)-dethiobiotin + (sulfur carrier)-SH + 2 reduced [2Fe-2S]-[ferredoxin] + 2 S-adenosyl-L-methionine = (sulfur carrier)-H + biotin + 2 5'-deoxyadenosine + 2 L-methionine + 2 oxidized [2Fe-2S]-[ferredoxin]. It functions in the pathway cofactor biosynthesis; biotin biosynthesis; biotin from 7,8-diaminononanoate: step 2/2. Its function is as follows. Biotin synthase; part of the cluster involved in the biosynthesis of biotin (also known as vitamin B8 or vitamin H), a water-soluble vitamin that functions as a prosthetic group of many carboxylases, such as acetyl-CoA carboxylase and pyruvate carboxylase. Catalyzes the conversion of dethiobiotin (DTB) to biotin by the insertion of a sulfur atom into dethiobiotin via a radical-based mechanism. In Emericella nidulans (strain FGSC A4 / ATCC 38163 / CBS 112.46 / NRRL 194 / M139) (Aspergillus nidulans), this protein is Biotin synthase, mitochondrial.